The primary structure comprises 344 residues: Cysteine proteinase 5 (344 aa).

An N-terminal signal peptide occupies residues 1–17 (MKVLSFLCVLLVSVATA). The propeptide at 18–111 (KQQFSELQYR…TQEEKVFTTS (94 aa)) is activation peptide. 3 disulfide bridges follow: Cys-133–Cys-174, Cys-167–Cys-207, and Cys-265–Cys-333. The active site involves Cys-136. His-272 is a catalytic residue. The N-linked (GlcNAc...) asparagine glycan is linked to Asn-297. Asn-311 is a catalytic residue.

The protein belongs to the peptidase C1 family. Post-translationally, glycosylated; contains GlcNAc-alpha-1-P-Ser residues.

The protein localises to the lysosome. This chain is Cysteine proteinase 5 (cprE), found in Dictyostelium discoideum (Social amoeba).